Here is a 407-residue protein sequence, read N- to C-terminus: Phosphopentomutase (407 aa).

Mn(2+)-binding residues include Asp10, Asp306, His311, Asp347, His348, and His359.

Belongs to the phosphopentomutase family. Mn(2+) serves as cofactor.

It localises to the cytoplasm. It carries out the reaction 2-deoxy-alpha-D-ribose 1-phosphate = 2-deoxy-D-ribose 5-phosphate. The catalysed reaction is alpha-D-ribose 1-phosphate = D-ribose 5-phosphate. It participates in carbohydrate degradation; 2-deoxy-D-ribose 1-phosphate degradation; D-glyceraldehyde 3-phosphate and acetaldehyde from 2-deoxy-alpha-D-ribose 1-phosphate: step 1/2. In terms of biological role, isomerase that catalyzes the conversion of deoxy-ribose 1-phosphate (dRib-1-P) and ribose 1-phosphate (Rib-1-P) to deoxy-ribose 5-phosphate (dRib-5-P) and ribose 5-phosphate (Rib-5-P), respectively. The sequence is that of Phosphopentomutase from Yersinia pestis bv. Antiqua (strain Antiqua).